The primary structure comprises 108 residues: Thiosulfate sulfurtransferase GlpE (108 aa).

The 89-residue stretch at 17–105 folds into the Rhodanese domain; sequence QEKEAVLVDI…WQRQFPAEVA (89 aa). Cysteine 65 functions as the Cysteine persulfide intermediate in the catalytic mechanism.

Belongs to the GlpE family.

Its subcellular location is the cytoplasm. The enzyme catalyses thiosulfate + hydrogen cyanide = thiocyanate + sulfite + 2 H(+). It carries out the reaction thiosulfate + [thioredoxin]-dithiol = [thioredoxin]-disulfide + hydrogen sulfide + sulfite + 2 H(+). In terms of biological role, transferase that catalyzes the transfer of sulfur from thiosulfate to thiophilic acceptors such as cyanide or dithiols. May function in a CysM-independent thiosulfate assimilation pathway by catalyzing the conversion of thiosulfate to sulfite, which can then be used for L-cysteine biosynthesis. The chain is Thiosulfate sulfurtransferase GlpE from Escherichia coli O139:H28 (strain E24377A / ETEC).